The sequence spans 607 residues: Elongation factor 4 (607 aa).

A tr-type G domain is found at Gly-11–Thr-193. Residues Asp-23–Thr-28 and Asn-140–Asp-143 contribute to the GTP site.

The protein belongs to the TRAFAC class translation factor GTPase superfamily. Classic translation factor GTPase family. LepA subfamily.

It localises to the cell membrane. It carries out the reaction GTP + H2O = GDP + phosphate + H(+). In terms of biological role, required for accurate and efficient protein synthesis under certain stress conditions. May act as a fidelity factor of the translation reaction, by catalyzing a one-codon backward translocation of tRNAs on improperly translocated ribosomes. Back-translocation proceeds from a post-translocation (POST) complex to a pre-translocation (PRE) complex, thus giving elongation factor G a second chance to translocate the tRNAs correctly. Binds to ribosomes in a GTP-dependent manner. This is Elongation factor 4 from Streptococcus pneumoniae (strain JJA).